The following is a 371-amino-acid chain: DNA replication and repair protein RecF (371 aa).

30–37 contacts ATP; that stretch reads GENAQGKT.

Belongs to the RecF family.

It localises to the cytoplasm. Functionally, the RecF protein is involved in DNA metabolism; it is required for DNA replication and normal SOS inducibility. RecF binds preferentially to single-stranded, linear DNA. It also seems to bind ATP. The sequence is that of DNA replication and repair protein RecF from Lysinibacillus sphaericus (strain C3-41).